A 177-amino-acid chain; its full sequence is Small ribosomal subunit protein uS5 (177 aa).

Residues 19–82 (WQERVVQIRR…ADGKKQLVEV (64 aa)) enclose the S5 DRBM domain.

It belongs to the universal ribosomal protein uS5 family. As to quaternary structure, part of the 30S ribosomal subunit. Contacts proteins S4 and S8.

Functionally, with S4 and S12 plays an important role in translational accuracy. Located at the back of the 30S subunit body where it stabilizes the conformation of the head with respect to the body. The sequence is that of Small ribosomal subunit protein uS5 from Acaryochloris marina (strain MBIC 11017).